Here is a 78-residue protein sequence, read N- to C-terminus: Sec-independent protein translocase protein TatA (78 aa).

The helical transmembrane segment at 1–21 threads the bilayer; that stretch reads MGSLSIWHWIVVLAVVLLLFG. Positions 43–78 are disordered; it reads LAEDDEPAKTPAAPPEAPRPLPHQTSSAAEAEKKPV. Positions 54–63 are enriched in pro residues; that stretch reads AAPPEAPRPL.

The protein belongs to the TatA/E family. In terms of assembly, the Tat system comprises two distinct complexes: a TatABC complex, containing multiple copies of TatA, TatB and TatC subunits, and a separate TatA complex, containing only TatA subunits. Substrates initially bind to the TatABC complex, which probably triggers association of the separate TatA complex to form the active translocon.

It is found in the cell inner membrane. Part of the twin-arginine translocation (Tat) system that transports large folded proteins containing a characteristic twin-arginine motif in their signal peptide across membranes. TatA could form the protein-conducting channel of the Tat system. The chain is Sec-independent protein translocase protein TatA from Xanthobacter autotrophicus (strain ATCC BAA-1158 / Py2).